The following is a 195-amino-acid chain: MKIIIIDTACANLASLKFCLDRLGFNATISRDLKELESADKLFLPGVGTAKEAMKNLEQFNLIDFIQNTKKPLLGICLGMQILGNFSEELNQETLKLIDFTTQKFKAKEGFTFPHMGWNEVYSSHALFKGLEGAYFYFVHSYCVGLGKYTIADCEYSQKFSASVMKDNFYGVQFHPERSSEAGEILISNFIKDIG.

The 194-residue stretch at 2–195 (KIIIIDTACA…LISNFIKDIG (194 aa)) folds into the Glutamine amidotransferase type-1 domain. Cys77 (nucleophile) is an active-site residue. Active-site residues include His175 and Glu177.

In terms of assembly, heterodimer of HisH and HisF.

The protein localises to the cytoplasm. It catalyses the reaction 5-[(5-phospho-1-deoxy-D-ribulos-1-ylimino)methylamino]-1-(5-phospho-beta-D-ribosyl)imidazole-4-carboxamide + L-glutamine = D-erythro-1-(imidazol-4-yl)glycerol 3-phosphate + 5-amino-1-(5-phospho-beta-D-ribosyl)imidazole-4-carboxamide + L-glutamate + H(+). It carries out the reaction L-glutamine + H2O = L-glutamate + NH4(+). It functions in the pathway amino-acid biosynthesis; L-histidine biosynthesis; L-histidine from 5-phospho-alpha-D-ribose 1-diphosphate: step 5/9. Functionally, IGPS catalyzes the conversion of PRFAR and glutamine to IGP, AICAR and glutamate. The HisH subunit provides the glutamine amidotransferase activity that produces the ammonia necessary to HisF for the synthesis of IGP and AICAR. In Campylobacter jejuni subsp. jejuni serotype O:2 (strain ATCC 700819 / NCTC 11168), this protein is Imidazole glycerol phosphate synthase subunit HisH 2 (hisH2).